Here is a 501-residue protein sequence, read N- to C-terminus: Cytochrome P450 2S1 (501 aa).

Cysteine 441 provides a ligand contact to heme.

It belongs to the cytochrome P450 family. The cofactor is heme.

Its subcellular location is the endoplasmic reticulum membrane. The protein localises to the microsome membrane. The catalysed reaction is all-trans-retinoate + reduced [NADPH--hemoprotein reductase] + O2 = all-trans-5,6-epoxyretinoate + oxidized [NADPH--hemoprotein reductase] + H2O + H(+). The enzyme catalyses all-trans-retinoate + reduced [NADPH--hemoprotein reductase] + O2 = all-trans-4-hydroxyretinoate + oxidized [NADPH--hemoprotein reductase] + H2O + H(+). It catalyses the reaction (5S)-hydroperoxy-(6E,8Z,11Z,14Z)-eicosatetraenoate = 5-oxo-(6E,8Z,11Z,14Z)-eicosatetraenoate + H2O. It carries out the reaction (12S)-hydroperoxy-(5Z,8Z,10E,14Z)-eicosatetraenoate = 12-oxo-(5Z,8Z,10E,14Z)-eicosatetraenoate + H2O. The catalysed reaction is (15S)-hydroperoxy-(5Z,8Z,11Z,13E)-eicosatetraenoate = 15-oxo-(5Z,8Z,11Z,13E)-eicosatetraenoate + H2O. The enzyme catalyses prostaglandin H2 = thromboxane A2. It catalyses the reaction prostaglandin H2 = (12S)-hydroxy-(5Z,8E,10E)-heptadecatrienoate + malonaldehyde. It carries out the reaction (13S)-hydroperoxy-(9Z,11E)-octadecadienoate = 13-oxo-(9Z,11E)-octadecadienoate + H2O. It functions in the pathway lipid metabolism; fatty acid metabolism. A cytochrome P450 monooxygenase involved in the metabolism of retinoids and eicosanoids. In epidermis, may contribute to the oxidative metabolism of all-trans-retinoic acid. For this activity, uses molecular oxygen inserting one oxygen atom into a substrate, and reducing the second into a water molecule, with two electrons provided by NADPH via cytochrome P450 reductase (NADPH--hemoprotein reductase). Additionally, displays peroxidase and isomerase activities toward various oxygenated eicosanoids such as prostaglandin H2 (PGH2) and hydroperoxyeicosatetraenoates (HPETEs). Independently of cytochrome P450 reductase, NADPH, and O2, catalyzes the breakdown of PGH2 to hydroxyheptadecatrienoic acid (HHT) and malondialdehyde (MDA), which is known to act as a mediator of DNA damage. The protein is Cytochrome P450 2S1 (Cyp2s1) of Mus musculus (Mouse).